Reading from the N-terminus, the 404-residue chain is NADH-quinone oxidoreductase subunit D 1 (404 aa).

The protein belongs to the complex I 49 kDa subunit family. In terms of assembly, NDH-1 is composed of 14 different subunits. Subunits NuoB, C, D, E, F, and G constitute the peripheral sector of the complex.

The protein localises to the cell membrane. It catalyses the reaction a quinone + NADH + 5 H(+)(in) = a quinol + NAD(+) + 4 H(+)(out). Its function is as follows. NDH-1 shuttles electrons from NADH, via FMN and iron-sulfur (Fe-S) centers, to quinones in the respiratory chain. The immediate electron acceptor for the enzyme in this species is believed to be a menaquinone. Couples the redox reaction to proton translocation (for every two electrons transferred, four hydrogen ions are translocated across the cytoplasmic membrane), and thus conserves the redox energy in a proton gradient. The sequence is that of NADH-quinone oxidoreductase subunit D 1 from Symbiobacterium thermophilum (strain DSM 24528 / JCM 14929 / IAM 14863 / T).